Reading from the N-terminus, the 339-residue chain is Serine racemase (339 aa).

Glu-13 is a binding site for Mg(2+). Residues Ser-31, Ser-32, Ile-33, Lys-51, and Thr-52 each coordinate ATP. The active-site Proton acceptor is the Lys-56. An N6-(pyridoxal phosphate)lysine modification is found at Lys-56. Position 69 (Pro-69) interacts with Ca(2+). Thr-71 is subject to Phosphothreonine. Thr-81 provides a ligand contact to Ca(2+). Catalysis depends on Ser-84, which acts as the Proton acceptor. Asn-86 provides a ligand contact to pyridoxal 5'-phosphate. Residue Gln-89 participates in ATP binding. Residue Cys-113 is modified to S-nitrosocysteine. Tyr-121 serves as a coordination point for ATP. Asn-154 contacts pyridoxal 5'-phosphate. Asp-178 contacts Mg(2+). 5 residues coordinate pyridoxal 5'-phosphate: Gly-185, Gly-186, Gly-187, Gly-188, and Met-189. Mg(2+) is bound by residues Glu-210, Ala-214, Asp-216, and Asn-247. The Ca(2+) site is built by Glu-210, Ala-214, Asp-216, and Asn-247. 3 residues coordinate Mn(2+): Glu-210, Ala-214, and Asp-216. Lys-279 contributes to the ATP binding site. Residue Ser-313 coordinates pyridoxal 5'-phosphate. ATP is bound at residue Asn-316.

It belongs to the serine/threonine dehydratase family. As to quaternary structure, homodimer. It depends on Mg(2+) as a cofactor. Mn(2+) serves as cofactor. Ca(2+) is required as a cofactor. The cofactor is pyridoxal 5'-phosphate. In terms of processing, S-nitrosylated, leading to decrease the enzyme activity. In terms of tissue distribution, expressed in the hippocampus (at protein level). Expressed in the small intestine.

The enzyme catalyses L-serine = D-serine. It catalyses the reaction D-serine = pyruvate + NH4(+). It carries out the reaction L-serine = pyruvate + NH4(+). Allosterically activated by magnesium, and possibly also other divalent metal cations. Allosterically activated by ATP, ADP or GTP. Catalyzes the synthesis of D-serine from L-serine. D-serine is a key coagonist with glutamate at NMDA receptors. Has dehydratase activity towards both L-serine and D-serine. The sequence is that of Serine racemase (Srr) from Mus musculus (Mouse).